Consider the following 601-residue polypeptide: Nuclear receptor subfamily 2 group C member 1 (601 aa).

Residues 1 to 179 (MATIEEIAHQ…RLQRCIAFGM (179 aa)) form a required for interaction with KAT2B region. A DNA-binding region (nuclear receptor) is located at residues 111–186 (FDLCVVCGDK…FGMKQDSVQC (76 aa)). NR C4-type zinc fingers lie at residues 114–134 (CVVC…CEGC) and 150–169 (CRGS…CQYC). Ser-198 and Ser-216 each carry phosphoserine. Thr-221 carries the post-translational modification Phosphothreonine. Thr-223 carries the phosphothreonine; by MAPK1 modification. Residue Lys-251 forms a Glycyl lysine isopeptide (Lys-Gly) (interchain with G-Cter in SUMO); alternate linkage. Residue Lys-251 forms a Glycyl lysine isopeptide (Lys-Gly) (interchain with G-Cter in SUMO2); alternate linkage. The 243-residue stretch at 349-591 (GSVHLITGDS…SVIPHILKME (243 aa)) folds into the NR LBD domain. Residue Ser-582 is modified to Phosphoserine; by PKC. The interval 585-601 (PHILKMEPGQYSKTSSL) is required for interaction with NRIP1. Lys-589 participates in a covalent cross-link: Glycyl lysine isopeptide (Lys-Gly) (interchain with G-Cter in SUMO2).

The protein belongs to the nuclear hormone receptor family. NR2 subfamily. Homodimer. Heterodimer; with NR2C2 which is required for chromatin remodeling and for binding to promoter regions such as globin DR1 repeats. Interacts with ESR1; the interaction prevents homodimerization of ESR1 and suppresses its transcriptional activity and cell growth. Interacts with NRIP1 (via its LXXLL motifs); the interaction provides corepressor activity. Interacts with HDAC3 (via the DNA-binding domain); the interaction recruits phosphorylated NR2C1 to PML bodies for sumoylation. Interacts with HDAC4 (via the DNA-binding domain). Interacts with PIAS1; the interaction is required for sumoylation of NR2C1. Interacts with UBE2I; the interaction is required for sumoylation of NR2C1. Interacts with KAT2B; the interaction acts as a corepressor of gene expression. In terms of processing, sumoylation requires both PIAS1 and UBE2I. Sumoylation appears to dissociate NR2C1 from the PML nuclear bodies. Enhances the interaction with NRIP1 but inhibits interaction with KAT2B. In proliferating cells, stimulation by all-trans retinoic acid, activation of MAPK1-mediated phosphorylation and recruitment to PML bodies with subsequent sumoylation, suppresses OCT4 expression. Phosphorylated on several serine and threonine residues. Phosphorylation on Thr-223, stimulated by all-trans retinoic acid (atRA) mediates PML location and sumoylation in proliferating cells which then modulates its association with effector molecules, KAT2B and NRIP1. Phosphorylation on Ser-582 by PKC is important for protein stability and function as activator of RARB.

The protein localises to the nucleus. It localises to the PML body. In terms of biological role, orphan nuclear receptor. Binds the IR7 element in the promoter of its own gene in an autoregulatory negative feedback mechanism. Primarily repressor of a broad range of genes including ESR1 and RARB. Together with NR2C2, forms the core of the DRED (direct repeat erythroid-definitive) complex that represses embryonic and fetal globin transcription. Binds to hormone response elements (HREs) consisting of two 5'-AGGTCA-3' half site direct repeat consensus sequences. Also activator of OCT4 gene expression. Plays a fundamental role in early embryogenesis and regulates embryonic stem cell proliferation and differentiation. Mediator of retinoic acid-regulated preadipocyte proliferation. The polypeptide is Nuclear receptor subfamily 2 group C member 1 (NR2C1) (Pongo abelii (Sumatran orangutan)).